The chain runs to 342 residues: Alpha-tocopherol transfer protein-like (342 aa).

The tract at residues 1-31 (MSEESDSLRTSPSVASLSENELPPPPEPPGY) is disordered. Residues 8 to 19 (LRTSPSVASLSE) are compositionally biased toward polar residues. The 166-residue stretch at 117-282 (KPSALKDVLA…EYGGTAGELD (166 aa)) folds into the CRAL-TRIO domain.

Its function is as follows. May act as a protein that binds a hydrophobic ligand. This is Alpha-tocopherol transfer protein-like (TTPAL) from Pongo abelii (Sumatran orangutan).